The chain runs to 149 residues: MSITPGTYNITNVAYTNRLIDLTGSNPAENTLIIGHHLNKTPSGYGNQQWTLVQLPHTTIYTMQAVNPQSYVRVRDDNLVDGAALVGSQQPTPVSIESAGNSGQFRIKIPNLGLALTLPSDANSTPIVLGEVDETSTNQLWAFESVSAV.

The residue at position 2 (Ser2) is an N-acetylserine. The a carbohydrate site is built by Asp21, Gly24, Asn39, and Asn47. The interval 110-112 (PNL) is involved in dimerization.

In terms of assembly, homodimer. In terms of processing, the N-terminus is blocked.

Its function is as follows. Lectin specific for terminal, non-reducing N-acetylgalactosamine (Gal-NAc)-containing carbohydrates including N,N'-diacetyllactosediamine/LDN (GalNAcbeta1-4GlcNAc, LacdiNAc). Specific also for carbohydrates containing N-acetylglucosamine (-GlcNAc) or N-acetyllactosamine (-Galbeta1-4GlcNAc) at the reducing end. Agglutinates human blood group A, AB, B and O erythrocytes with a strong preference for group A. Agglutinates bovine erythrocytes with a very low specificity. Binds carbohydrates bivalently, which is required for its biological activity. Exhibits insecticidal activity against the fruit fly D.melanogaster, mosquito A.aegypti, and amoebozoa A.castellanii. Has anti-nutritional activity against Colorado potato beetle L.decemlineata, and against worm C.elegans. Has antiproliferative activity against human leukemic T-cells. Has an immunostimulatory effect on human antigen-presenting dendritic cells, which are subsequently able to induce efficient T-cell immune responses. This is Ricin B-like lectin from Clitocybe nebularis (Clouded agaric).